An 86-amino-acid polypeptide reads, in one-letter code: Small ribosomal subunit protein bS20 (86 aa).

Basic residues predominate over residues 1 to 11 (MANIKQQKKRN). The segment at 1 to 20 (MANIKQQKKRNKTNEKRRLQ) is disordered.

This sequence belongs to the bacterial ribosomal protein bS20 family.

Functionally, binds directly to 16S ribosomal RNA. In Aster yellows witches'-broom phytoplasma (strain AYWB), this protein is Small ribosomal subunit protein bS20.